We begin with the raw amino-acid sequence, 214 residues long: UPF0758 protein (214 aa).

In terms of domain architecture, MPN spans 92–214 (VLSSWQALLD…ELSFRAEGLL (123 aa)). Zn(2+)-binding residues include H163, H165, and D176. A JAMM motif motif is present at residues 163 to 176 (HNHPSGDPTPSQAD).

It belongs to the UPF0758 family.

The sequence is that of UPF0758 protein from Rhodobacter capsulatus (Rhodopseudomonas capsulata).